Consider the following 474-residue polypeptide: Serine--tRNA ligase (474 aa).

Residue 278-280 (TAE) participates in L-serine binding. An ATP-binding site is contributed by 309-311 (RSE). An L-serine-binding site is contributed by glutamate 332. Residue 396 to 399 (EISS) participates in ATP binding. Serine 432 provides a ligand contact to L-serine.

Belongs to the class-II aminoacyl-tRNA synthetase family. Type-1 seryl-tRNA synthetase subfamily. In terms of assembly, homodimer. The tRNA molecule binds across the dimer.

It is found in the cytoplasm. The catalysed reaction is tRNA(Ser) + L-serine + ATP = L-seryl-tRNA(Ser) + AMP + diphosphate + H(+). The enzyme catalyses tRNA(Sec) + L-serine + ATP = L-seryl-tRNA(Sec) + AMP + diphosphate + H(+). The protein operates within aminoacyl-tRNA biosynthesis; selenocysteinyl-tRNA(Sec) biosynthesis; L-seryl-tRNA(Sec) from L-serine and tRNA(Sec): step 1/1. Catalyzes the attachment of serine to tRNA(Ser). Is also able to aminoacylate tRNA(Sec) with serine, to form the misacylated tRNA L-seryl-tRNA(Sec), which will be further converted into selenocysteinyl-tRNA(Sec). The chain is Serine--tRNA ligase from Caulobacter sp. (strain K31).